We begin with the raw amino-acid sequence, 229 residues long: Type III pantothenate kinase (229 aa).

6 to 13 lines the ATP pocket; the sequence is NIGNSRQH. Substrate is bound by residues Tyr-77 and 81-84; that span reads GIDR. Residue Asp-83 is the Proton acceptor of the active site. Asp-103 contributes to the K(+) binding site. Thr-106 contacts ATP. Thr-159 serves as a coordination point for substrate.

It belongs to the type III pantothenate kinase family. In terms of assembly, homodimer. Requires NH4(+) as cofactor. K(+) serves as cofactor.

Its subcellular location is the cytoplasm. The catalysed reaction is (R)-pantothenate + ATP = (R)-4'-phosphopantothenate + ADP + H(+). Its pathway is cofactor biosynthesis; coenzyme A biosynthesis; CoA from (R)-pantothenate: step 1/5. Functionally, catalyzes the phosphorylation of pantothenate (Pan), the first step in CoA biosynthesis. This Gloeobacter violaceus (strain ATCC 29082 / PCC 7421) protein is Type III pantothenate kinase.